Consider the following 434-residue polypeptide: UPF0053 protein YrkA (434 aa).

One can recognise a CNNM transmembrane domain in the interval 1 to 201 (MTTINLIIFT…YKSGEINQNE (201 aa)). 3 helical membrane-spanning segments follow: residues 7–27 (IIFT…FAIV), 64–84 (LGIT…FEVI), and 101–121 (VLIL…VGEL). CBS domains are found at residues 220 to 282 (MIPR…KIKE) and 289 to 346 (HINP…IRDE).

Belongs to the UPF0053 family.

The protein resides in the cell membrane. This chain is UPF0053 protein YrkA (yrkA), found in Bacillus subtilis (strain 168).